The chain runs to 2240 residues: Cadherin-89D (2240 aa).

Cadherin domains follow at residues 70–179 (SEGV…APEF), 180–295 (LNVP…PPKF), 296–411 (TEGV…VPEF), 412–528 (EADY…TPKF), and 529–643 (EHGN…APYE). Asn114, Asn119, Asn191, Asn278, Asn334, Asn417, Asn585, Asn720, Asn752, Asn822, Asn833, Asn983, Asn989, Asn1006, Asn1255, Asn1318, Asn1486, Asn1529, and Asn1556 each carry an N-linked (GlcNAc...) asparagine glycan. A disordered region spans residues 814 to 844 (MPSEPTSRNITMGSRFRSRNRSRSSKSKRRL). Cadherin domains follow at residues 824–927 (TMGS…APKF), 928–1087 (NALT…APMF), 1171–1284 (TTKC…APTF), 1285–1389 (KKSW…RPEF), and 1411–1520 (MLPV…PPKS). Basic residues predominate over residues 829–844 (FRSRNRSRSSKSKRRL). Cadherin domains are found at residues 1534-1660 (QHAY…APKF) and 1661-1774 (RGNG…MPVE). A helical transmembrane segment spans residues 1884–1904 (FVTVVLLALISLGALIAACCY). Residues 1905–2240 (VCMRQKRRLW…LEFSKSNSLF (336 aa)) are Cytoplasmic-facing. 2 disordered regions span residues 1930 to 1972 (IAGI…PESV) and 2121 to 2140 (AHLELRQPNTDSSDTYEDSL). A compositionally biased stretch (basic residues) spans 1939 to 1952 (QKQRRQRQQRHTQR). Over residues 1953–1964 (CSKGSTGSQRPT) the composition is skewed to polar residues.

The protein localises to the cell membrane. Its function is as follows. Cadherins are calcium-dependent cell adhesion proteins. They preferentially interact with themselves in a homophilic manner in connecting cells. The sequence is that of Cadherin-89D (Cad89D) from Drosophila melanogaster (Fruit fly).